Here is a 104-residue protein sequence, read N- to C-terminus: Urease subunit beta (104 aa).

The protein belongs to the urease beta subunit family. Heterotrimer of UreA (gamma), UreB (beta) and UreC (alpha) subunits. Three heterotrimers associate to form the active enzyme.

It is found in the cytoplasm. The catalysed reaction is urea + 2 H2O + H(+) = hydrogencarbonate + 2 NH4(+). The protein operates within nitrogen metabolism; urea degradation; CO(2) and NH(3) from urea (urease route): step 1/1. The protein is Urease subunit beta of Rhodococcus jostii (strain RHA1).